The sequence spans 294 residues: NAD kinase (294 aa).

The active-site Proton acceptor is Asp-74. Residues 74–75, 148–149, His-159, Arg-176, Asp-178, and 189–194 each bind NAD(+); these read DG, NE, and TAYSLS.

Belongs to the NAD kinase family. The cofactor is a divalent metal cation.

The protein localises to the cytoplasm. It catalyses the reaction NAD(+) + ATP = ADP + NADP(+) + H(+). Its function is as follows. Involved in the regulation of the intracellular balance of NAD and NADP, and is a key enzyme in the biosynthesis of NADP. Catalyzes specifically the phosphorylation on 2'-hydroxyl of the adenosine moiety of NAD to yield NADP. This Pseudoalteromonas translucida (strain TAC 125) protein is NAD kinase.